Consider the following 474-residue polypeptide: MANAKGKVTQIIGAVVDVQFDGELPAILNALTTDNNGKKLVLEVAQHLGENSVRTIAMDATEGLVRGQEVTDTGAPISIPVGNATLGRILNVVGEPVDEGEPIVAKETRAIHQPAPEFNDQSTESEVLVTGIKVIDLLAPYAKGGKIGLFGGAGVGKTVLIMELINNIAKVHSGYSVFAGVGERTREGNDLYHEMIESNVIKPDNLEESQVALVYGQMNEPPGARARVALTGLTLAEQFRDQSGTDVLFFVDNIFRFTQAGSEVSALLGRIPSAVGYQPTLATDMGAMQERITSTKNGSITSIQAVYVPADDLTDPAPATTFAHLDATTVLNRAISELGIYPAVDPLDSSSRLMDPQIVGEEHYKVASDVQQILQRYKSLQDIIAILGMDELSEEDKLTVARARKIQRFLSQPFDVAKVFTGSDGVQVSLEDTIASFKAVVAGEYDHLPEGAFYMVGGIDEVIAKAEKMAADAA.

151 to 158 (GGAGVGKT) provides a ligand contact to ATP.

Belongs to the ATPase alpha/beta chains family. In terms of assembly, F-type ATPases have 2 components, CF(1) - the catalytic core - and CF(0) - the membrane proton channel. CF(1) has five subunits: alpha(3), beta(3), gamma(1), delta(1), epsilon(1). CF(0) has three main subunits: a(1), b(2) and c(9-12). The alpha and beta chains form an alternating ring which encloses part of the gamma chain. CF(1) is attached to CF(0) by a central stalk formed by the gamma and epsilon chains, while a peripheral stalk is formed by the delta and b chains.

It is found in the cell inner membrane. It catalyses the reaction ATP + H2O + 4 H(+)(in) = ADP + phosphate + 5 H(+)(out). Its function is as follows. Produces ATP from ADP in the presence of a proton gradient across the membrane. The catalytic sites are hosted primarily by the beta subunits. The sequence is that of ATP synthase subunit beta from Ruegeria sp. (strain TM1040) (Silicibacter sp.).